A 349-amino-acid polypeptide reads, in one-letter code: Small ribosomal subunit biogenesis GTPase RsgA (349 aa).

Residues 1 to 11 (MSKKKLSKGQQ) show a composition bias toward basic residues. Residues 1-29 (MSKKKLSKGQQRRVSANHQRRLKKTESKV) form a disordered region. The 171-residue stretch at 102–272 (HSVLTRPDYY…VIDSPGVREF (171 aa)) folds into the CP-type G domain. GTP-binding positions include 158 to 161 (NKID) and 212 to 220 (GQSGVGKSS). Cys-296, Cys-301, His-303, and Cys-309 together coordinate Zn(2+).

The protein belongs to the TRAFAC class YlqF/YawG GTPase family. RsgA subfamily. Monomer. Associates with 30S ribosomal subunit, binds 16S rRNA. Requires Zn(2+) as cofactor.

It is found in the cytoplasm. In terms of biological role, one of several proteins that assist in the late maturation steps of the functional core of the 30S ribosomal subunit. Helps release RbfA from mature subunits. May play a role in the assembly of ribosomal proteins into the subunit. Circularly permuted GTPase that catalyzes slow GTP hydrolysis, GTPase activity is stimulated by the 30S ribosomal subunit. This is Small ribosomal subunit biogenesis GTPase RsgA from Pectobacterium atrosepticum (strain SCRI 1043 / ATCC BAA-672) (Erwinia carotovora subsp. atroseptica).